The chain runs to 374 residues: F(420)H(2) dehydrogenase subunit D (374 aa).

This sequence belongs to the complex I 49 kDa subunit family. As to quaternary structure, the FPO complex is composed of at least 13 different subunits.

The protein localises to the cell inner membrane. It catalyses the reaction methanophenazine + reduced coenzyme F420-(gamma-L-Glu)(n) = dihydromethanophenazine + oxidized coenzyme F420-(gamma-L-Glu)(n) + H(+). Its function is as follows. Component of the F(420)H(2) dehydrogenase (FPO complex) which is part of the energy-conserving F(420)H(2):heterodisulfide oxidoreductase system. The membrane-bound electron transfer system of the complex plays an important role in the metabolism of methylotrophic methanogens when the organisms grow on methanol or methylamines. Catalyzes the oxidation of methanophenazine to dihydromethanophenazine. It shuttles electrons from F(420)H(2), via FAD and iron-sulfur (Fe-S) centers, to methanophenazine (an electron carrier in the membrane). It couples the redox reaction to proton translocation (for every two electrons transferred, two hydrogen ions are translocated across the cytoplasmic membrane), and thus conserves the redox energy in a proton gradient. It also catalyzes the oxidation of F(420)H(2) with quinones such as 2,3-dimethyl-1,4-naphthoquinone, 2-methyl-1,4-naphthoquinone and tetramethyl-p-benzoquinone. The chain is F(420)H(2) dehydrogenase subunit D (fpoD) from Methanosarcina mazei (strain ATCC BAA-159 / DSM 3647 / Goe1 / Go1 / JCM 11833 / OCM 88) (Methanosarcina frisia).